We begin with the raw amino-acid sequence, 229 residues long: 2-C-methyl-D-erythritol 4-phosphate cytidylyltransferase (229 aa).

Belongs to the IspD/TarI cytidylyltransferase family. IspD subfamily.

It carries out the reaction 2-C-methyl-D-erythritol 4-phosphate + CTP + H(+) = 4-CDP-2-C-methyl-D-erythritol + diphosphate. The protein operates within isoprenoid biosynthesis; isopentenyl diphosphate biosynthesis via DXP pathway; isopentenyl diphosphate from 1-deoxy-D-xylulose 5-phosphate: step 2/6. Functionally, catalyzes the formation of 4-diphosphocytidyl-2-C-methyl-D-erythritol from CTP and 2-C-methyl-D-erythritol 4-phosphate (MEP). The sequence is that of 2-C-methyl-D-erythritol 4-phosphate cytidylyltransferase from Neisseria meningitidis serogroup C (strain 053442).